A 357-amino-acid chain; its full sequence is Spore wall and anchoring disk complex protein EnP1 (357 aa).

Residues 1–16 (MKLLGFLIVGLSAISA) form the signal peptide. An N-linked (GlcNAc...) asparagine glycan is attached at Asn47. The short motif at 150–158 (ERRPHYKKI) is the HBM1 element. The HBM2 motif lies at 329–334 (LKKVRG).

The protein localises to the spore wall. It is found in the spore. It localises to the perispore. Spore wall protein involved in the adhesion to host cells surface glycoaminoglycans (GAGs). Microsporidian spore adherence is an integral part of activation and host cell invasion which requires the extrusion at the spore apex of a very long and coiled structure, the polar tube, through which the sporoplasm is pushed to enter into the potential host cell. The polypeptide is Spore wall and anchoring disk complex protein EnP1 (EnP1) (Encephalitozoon cuniculi (strain GB-M1) (Microsporidian parasite)).